Here is a 1376-residue protein sequence, read N- to C-terminus: Mediator of RNA polymerase II transcription subunit 23 (1376 aa).

Over residues 1346 to 1369 the composition is skewed to low complexity; the sequence is SNSSSVQQTSSASSPTAQSTAGAA. Residues 1346 to 1376 are disordered; sequence SNSSSVQQTSSASSPTAQSTAGAAIPLSVTQ.

Belongs to the Mediator complex subunit 23 family. Component of the Mediator complex.

It is found in the nucleus. Functionally, component of the Mediator complex, a coactivator involved in the regulated transcription of nearly all RNA polymerase II-dependent genes. Mediator functions as a bridge to convey information from gene-specific regulatory proteins to the basal RNA polymerase II transcription machinery. Mediator is recruited to promoters by direct interactions with regulatory proteins and serves as a scaffold for the assembly of a functional preinitiation complex with RNA polymerase II and the general transcription factors. This Danio rerio (Zebrafish) protein is Mediator of RNA polymerase II transcription subunit 23 (med23).